Consider the following 767-residue polypeptide: Pre-mRNA-splicing factor ATP-dependent RNA helicase PRP43 (767 aa).

Residues 1-74 (MGSKRRFSSE…KLEDGKINPF (74 aa)) are disordered. Residues Ser8 and Ser9 each carry the phosphoserine modification. Residues 58 to 70 (TSAEEAQKLEDGK) show a composition bias toward basic and acidic residues. The region spanning 103–268 (LKLYQNNQIM…FNDAPLLAVP (166 aa)) is the Helicase ATP-binding domain. Residue 116–123 (GETGSGKT) participates in ATP binding. Positions 215–218 (DEAH) match the DEAH box motif. The 181-residue stretch at 293 to 473 (TVLQIHATEE…STVLELKKLG (181 aa)) folds into the Helicase C-terminal domain.

This sequence belongs to the DEAD box helicase family. DEAH subfamily. DDX15/PRP43 sub-subfamily. Component of the NTR complex (NTC-related complex), composed of NTR1, NTR2 and PRP43. Interacts with NTR1 and NTR2. Interacts with SPP382.

It is found in the nucleus. The catalysed reaction is ATP + H2O = ADP + phosphate + H(+). In terms of biological role, pre-mRNA processing factor involved in disassembly of spliceosomes after the release of mature mRNA. The polypeptide is Pre-mRNA-splicing factor ATP-dependent RNA helicase PRP43 (PRP43) (Saccharomyces cerevisiae (strain ATCC 204508 / S288c) (Baker's yeast)).